A 293-amino-acid polypeptide reads, in one-letter code: Ribosomal protein L11 methyltransferase (293 aa).

The S-adenosyl-L-methionine site is built by Thr145, Gly166, Asp188, and Asn230.

This sequence belongs to the methyltransferase superfamily. PrmA family.

The protein localises to the cytoplasm. It carries out the reaction L-lysyl-[protein] + 3 S-adenosyl-L-methionine = N(6),N(6),N(6)-trimethyl-L-lysyl-[protein] + 3 S-adenosyl-L-homocysteine + 3 H(+). Methylates ribosomal protein L11. The protein is Ribosomal protein L11 methyltransferase of Serratia proteamaculans (strain 568).